Consider the following 392-residue polypeptide: Retrovirus-related Pol polyprotein from type-1 retrotransposable element R1 4 (392 aa).

A Reverse transcriptase domain is found at 1–230 (PFADDLAVLV…GGVVIRRRPE (230 aa)). A nucleic acid-binding endonuclease region spans residues 231-392 (GLKENYNRVL…DEGLSSESEE (162 aa)).

It catalyses the reaction DNA(n) + a 2'-deoxyribonucleoside 5'-triphosphate = DNA(n+1) + diphosphate. This Nasonia vitripennis (Parasitic wasp) protein is Retrovirus-related Pol polyprotein from type-1 retrotransposable element R1 4.